The following is a 245-amino-acid chain: Transcriptional activator protein ExpR (245 aa).

In terms of domain architecture, HTH luxR-type spans 173–238 (RSNDKDIFSQ…HAIRLGIELQ (66 aa)). A DNA-binding region (H-T-H motif) is located at residues 197-216 (YQEIALILDIKTGTVKFHIG).

Belongs to the autoinducer-regulated transcriptional regulatory protein family.

Functionally, functions as an OHLL responsive transcriptional regulator that acts in virulence (soft rot disease) through the activation of genes for plant tissue macerating enzymes. This is Transcriptional activator protein ExpR (expR) from Pectobacterium parmentieri.